Here is a 160-residue protein sequence, read N- to C-terminus: Serine-protein kinase RsbW (160 aa).

This sequence belongs to the anti-sigma-factor family.

The enzyme catalyses L-seryl-[protein] + ATP = O-phospho-L-seryl-[protein] + ADP + H(+). The catalysed reaction is L-threonyl-[protein] + ATP = O-phospho-L-threonyl-[protein] + ADP + H(+). In terms of biological role, negative regulator of sigma-B activity. Phosphorylates and inactivates its specific antagonist protein, RsbV. Upon phosphorylation of RsbV, RsbW is released and binds to sigma-B, thereby blocking its ability to form an RNA polymerase holoenzyme (E-sigma-B). In Bacillus velezensis (strain DSM 23117 / BGSC 10A6 / LMG 26770 / FZB42) (Bacillus amyloliquefaciens subsp. plantarum), this protein is Serine-protein kinase RsbW.